The sequence spans 364 residues: GTPase Obg (364 aa).

The Obg domain occupies 1–159 (MKFVDEAYID…KSLKLELKVL (159 aa)). In terms of domain architecture, OBG-type G spans 160-334 (ADVGLLGMPN…LVKTIYQHVK (175 aa)). Residues 166–173 (GMPNAGKS), 191–195 (FTTLH), 213–216 (DLPG), 284–287 (NKLD), and 315–317 (SAL) each bind GTP. Mg(2+)-binding residues include Ser173 and Thr193. The disordered stretch occupies residues 337 to 364 (QKSEQPEEEVDPRFIELPPEPAKPASSD).

This sequence belongs to the TRAFAC class OBG-HflX-like GTPase superfamily. OBG GTPase family. As to quaternary structure, monomer. The cofactor is Mg(2+).

It localises to the cytoplasm. An essential GTPase which binds GTP, GDP and possibly (p)ppGpp with moderate affinity, with high nucleotide exchange rates and a fairly low GTP hydrolysis rate. Plays a role in control of the cell cycle, stress response, ribosome biogenesis and in those bacteria that undergo differentiation, in morphogenesis control. This Polaromonas naphthalenivorans (strain CJ2) protein is GTPase Obg.